The following is a 384-amino-acid chain: Probable UDP-galactopyranose mutase (384 aa).

An N-terminal signal peptide occupies residues 1–19 (MNNKNIMIVGAGFSGVVIA). Residues S14, 33-34 (DR), N41, and 60-61 (HI) contribute to the FAD site. The UDP-alpha-D-galactose site is built by N84, F151, T156, W160, and Y185. An FAD-binding site is contributed by F219. The UDP-alpha-D-galactose site is built by N270, R280, and Y314. Position 343 (R343) interacts with FAD. UDP-alpha-D-galactose is bound at residue Y349. Residue 350 to 355 (LDMDVT) coordinates FAD.

It belongs to the UDP-galactopyranose/dTDP-fucopyranose mutase family. In terms of assembly, homodimer. The cofactor is FAD.

It carries out the reaction UDP-alpha-D-galactose = UDP-alpha-D-galactofuranose. The protein operates within bacterial outer membrane biogenesis; LPS O-antigen biosynthesis. In terms of biological role, catalyzes the interconversion through a 2-keto intermediate of uridine diphosphogalactopyranose (UDP-GalP) into uridine diphosphogalactofuranose (UDP-GalF). This chain is Probable UDP-galactopyranose mutase (rfbD), found in Klebsiella pneumoniae.